The following is a 623-amino-acid chain: MLALDSSRQQQTSYFQDVHMDPALVDPFGFQMDNLGGFGQTSGPTSAPTSYYGTSPVYADSQLEPKTSAFPPMPPTPPSLPVPYSTEPYMSGLSSASGPSIASASSSAIGSPYSCTAHTFPESWVDTNHGIGLPAAVMDEFFPNEFMGSSLEADHTYQRKGPDDFVEHSNFSANCGFFLQSPDQSHLPVAENYSADHLSQTGLAVSSPMPNSGPHSRSVSIYDRRSSISSTNSRRSQLSPAASVADFDEESKEKGRCPHPDCGRVFKDLKAHMLTHQSERPEKCPIVTCEYHVKGFARKYDKNRHTLTHYKGTMVCGFCPGSGSPAEKSFNRADVFKRHLTSVHGVEQTPPNCRKRSPGASSVKKVSDYCQDATGKCSTCSATFSNAQDFYEHLDDCVLRVVQQVEPSEVINQQRLAEVDCDEEVKKTMEKHKLLDAAGDVDDEPEEDDDDYNELNLQLRSSKGAFKSNKANSSLGSRPIMGNHNAVTKNGKARATISKRRNNRDRYPPSWGCPSSSMKTKKRVLCVFDGQRRLWKDEMMLDNEFEVRLKLPGGAGDGTNREAYITDLDVETLKRAEGVLSANEDEKGPWLEGPATHFMGQPAKMLPALSHTHEDVDIDDLMS.

Polar residues predominate over residues 202–219; sequence GLAVSSPMPNSGPHSRSV. Disordered stretches follow at residues 202-256 and 468-493; these read GLAV…EKGR and SNKA…NGKA. Over residues 227–239 the composition is skewed to low complexity; that stretch reads SISSTNSRRSQLS. The C2H2-type zinc-finger motif lies at 255–276; sequence GRCPHPDCGRVFKDLKAHMLTH.

Its subcellular location is the nucleus. Its function is as follows. Transcription factor involved in fungal growth and virulence potential. Negatively regulates antifungal drug susceptibility via transcriptional inhibition of the expressions of drug efflux pumps in a crzA-dependent way. Under the treatment of azoles, both zfpA and crzA transfer to nuclei and coregulate the expression of multidrug transporters and then keep normal drug susceptibility in fungal cells. The protein is C2H2-type transcription factor zfpA of Aspergillus fumigatus (strain CBS 144.89 / FGSC A1163 / CEA10) (Neosartorya fumigata).